Reading from the N-terminus, the 87-residue chain is uncharacterized protein (87 aa).

It to A.fulgidus AF_0255 and AF_1348.

This is an uncharacterized protein from Archaeoglobus fulgidus (strain ATCC 49558 / DSM 4304 / JCM 9628 / NBRC 100126 / VC-16).